Consider the following 230-residue polypeptide: UPF0758 protein Daud_1467 (230 aa).

Positions 108-230 (TVRTPEEAAG…FTSLKLEGLF (123 aa)) constitute an MPN domain. Residues His179, His181, and Asp192 each coordinate Zn(2+). The JAMM motif signature appears at 179 to 192 (HNHPSGDPAPSPQD).

This sequence belongs to the UPF0758 family.

This chain is UPF0758 protein Daud_1467, found in Desulforudis audaxviator (strain MP104C).